The primary structure comprises 420 residues: Putative competence-damage inducible protein (420 aa).

Belongs to the CinA family.

The protein is Putative competence-damage inducible protein of Lactiplantibacillus plantarum (strain ATCC BAA-793 / NCIMB 8826 / WCFS1) (Lactobacillus plantarum).